The sequence spans 465 residues: Biotin biosynthesis bifunctional protein BioCD (465 aa).

The tract at residues Met1–Gly254 is malonyl-ACP O-methyltransferase. ATP is bound by residues Asp234 and Gly263 to Leu268. The segment at Val255–Arg465 is DTB synthetase. Residue Thr267 participates in Mg(2+) binding. Residue Lys283 is part of the active site. Thr287 provides a ligand contact to substrate. Residues Asp295, Glu351–Gly354, and Pro435–Leu437 each bind ATP. Mg(2+) is bound by residues Asp295 and Glu351.

This sequence in the N-terminal section; belongs to the methyltransferase superfamily. It in the C-terminal section; belongs to the dethiobiotin synthetase family. Mg(2+) is required as a cofactor.

It is found in the cytoplasm. It carries out the reaction (7R,8S)-7,8-diammoniononanoate + CO2 + ATP = (4R,5S)-dethiobiotin + ADP + phosphate + 3 H(+). It catalyses the reaction malonyl-[ACP] + S-adenosyl-L-methionine = malonyl-[ACP] methyl ester + S-adenosyl-L-homocysteine. Its pathway is cofactor biosynthesis; biotin biosynthesis; biotin from 7,8-diaminononanoate: step 1/2. The protein operates within cofactor biosynthesis; biotin biosynthesis. Its function is as follows. Converts the free carboxyl group of a malonyl-thioester to its methyl ester by transfer of a methyl group from S-adenosyl-L-methionine (SAM). It allows synthesis of pimeloyl-ACP via the fatty acid synthetic pathway. Catalyzes a mechanistically unusual reaction, the ATP-dependent insertion of CO2 between the N7 and N8 nitrogen atoms of 7,8-diaminopelargonic acid (DAPA, also called 7,8-diammoniononanoate) to form a ureido ring. The protein is Biotin biosynthesis bifunctional protein BioCD of Bordetella avium (strain 197N).